Here is a 296-residue protein sequence, read N- to C-terminus: NAD kinase (296 aa).

Catalysis depends on Asp78, which acts as the Proton acceptor. Residues 78 to 79, 152 to 153, Arg180, Asp182, and Gln251 each bind NAD(+); these read DG and ND.

The protein belongs to the NAD kinase family. The cofactor is a divalent metal cation.

The protein localises to the cytoplasm. It carries out the reaction NAD(+) + ATP = ADP + NADP(+) + H(+). Functionally, involved in the regulation of the intracellular balance of NAD and NADP, and is a key enzyme in the biosynthesis of NADP. Catalyzes specifically the phosphorylation on 2'-hydroxyl of the adenosine moiety of NAD to yield NADP. The protein is NAD kinase of Neisseria gonorrhoeae (strain ATCC 700825 / FA 1090).